The primary structure comprises 204 residues: Inositol diphosphatase DSP2 (204 aa).

The segment at 1–27 (MQLEISPRQRSQQQKEEEGEHQQRAGE) is disordered. Residues 13-27 (QQKEEEGEHQQRAGE) are compositionally biased toward basic and acidic residues. Positions 51–203 (NFAEVNDGIF…SSLMHLTASQ (153 aa)) constitute a Tyrosine-protein phosphatase domain. The segment at 107 to 119 (FGIDGSKELLVNI) is WPD loop important for active site topology. 1D-myo-inositol hexakisphosphate-binding residues include Asn-118, Ile-119, and Lys-123. The active-site Phosphocysteine intermediate is Cys-143.

This sequence belongs to the protein-tyrosine phosphatase family. Atypical dual-specificity phosphatase Siw14-like subfamily. In terms of tissue distribution, expressed in roots and young panicles.

It localises to the cytoplasm. It is found in the nucleus. It carries out the reaction 5-diphospho-1D-myo-inositol 1,2,3,4,6-pentakisphosphate + H2O = 1D-myo-inositol hexakisphosphate + phosphate + H(+). The catalysed reaction is 1,5-bis(diphospho)-1D-myo-inositol 2,3,4,6-tetrakisphosphate + H2O = 1-diphospho-1D-myo-inositol 2,3,4,5,6-pentakisphosphate + phosphate + 2 H(+). It catalyses the reaction 3,5-bis(diphospho)-1D-myo-inositol 1,2,4,6-tetrakisphosphate + H2O = 3-diphospho-1D-myo-inositol 1,2,4,5,6-pentakisphosphate + phosphate + 2 H(+). The enzyme catalyses 6-diphospho-1D-myo-inositol pentakisphosphate + H2O = 1D-myo-inositol hexakisphosphate + phosphate + H(+). Functionally, cleaves the beta-phosphate at the 5-position of soluble inositol pyrophosphates. Has highest activity on 5-diphosphoinositol 1,2,3,4,6-pentakisphosphate (5-InsP(7)). Acts as a negative regulator of defense responses against the fungal pathogen Magnaporthe oryzae. The polypeptide is Inositol diphosphatase DSP2 (Oryza sativa subsp. japonica (Rice)).